Here is a 308-residue protein sequence, read N- to C-terminus: Olfactory receptor 4E2 (308 aa).

Residues 1 to 24 lie on the Extracellular side of the membrane; sequence MGALNQTRVTEFIFLGLTDNWVLE. N5 is a glycosylation site (N-linked (GlcNAc...) asparagine). Residues 25–45 traverse the membrane as a helical segment; that stretch reads ILFFVPFTVTYMLTLLGNFLI. Over 46–57 the chain is Cytoplasmic; it reads VVTIVFTPRLHN. Residues 58–78 form a helical membrane-spanning segment; the sequence is PMYFFLSNLSFIDICHSSVTV. Residues 79 to 97 lie on the Extracellular side of the membrane; that stretch reads PKMLEGLLLERKTISFDNC. Cysteines 97 and 179 form a disulfide. A helical membrane pass occupies residues 98–118; that stretch reads IAQLFFLHLFACSEIFLLTIM. The Cu cation site is built by H105 and C109. The Cytoplasmic portion of the chain corresponds to 119–143; that stretch reads AYDRYVAICIPLHYSNVMNMKVCVQ. A helical membrane pass occupies residues 144–164; sequence LVFALWLGGTIHSLVQTFLTI. At 165–204 the chain is on the extracellular side; the sequence is RLPYCGPNIIDSYFCDVPPVIKLACTDTYLTGILIVSNSG. Residues 205–225 traverse the membrane as a helical segment; the sequence is TISLVCFLALVTSYTVILFSL. Over 226–236 the chain is Cytoplasmic; sequence RKQSAEGRRKA. Residues 237-257 form a helical membrane-spanning segment; it reads LSTCSAHFMVVALFFGPCIFL. Over 258-268 the chain is Extracellular; that stretch reads YTRPDSSFSID. R260 provides a ligand contact to Cu cation. The chain crosses the membrane as a helical span at residues 269 to 289; that stretch reads KVVSVFYTVVTPLLNPLIYTL. The Cytoplasmic segment spans residues 290-308; the sequence is RNEEVKTAMKHLRQRRICS.

It belongs to the G-protein coupled receptor 1 family. As to expression, expressed in olfactory epithelium, specifically in the olfactory sensory neurons of the septal organ.

The protein localises to the cell membrane. Copper binding enhances receptor activity in response to odorant binding. Olfactory receptor that is activated by the binding of organosulfur odorants with thioether groups such as (methylthio)methanethiol (MTMT) and bis(methylthiomethyl) disulfide. Also binds odorants cis-cyclooctene and tert-butyl mercaptan. The activity of this receptor is mediated by G proteins which activate adenylyl cyclase (Potential). The polypeptide is Olfactory receptor 4E2 (Mus musculus (Mouse)).